We begin with the raw amino-acid sequence, 590 residues long: Myo-inositol transporter 3A (590 aa).

Over 1 to 57 (MSATHIENRDDSFLENKGIDHIGRPENNNGSQEPPSPSGFGGHLIDENLVRVEGEDK) the chain is Cytoplasmic. Residues 15–24 (ENKGIDHIGR) are compositionally biased toward basic and acidic residues. Positions 15–40 (ENKGIDHIGRPENNNGSQEPPSPSGF) are disordered. Residues 58–78 (VTWYLCFLISASAIAGFLFGY) form a helical membrane-spanning segment. The Extracellular segment spans residues 79-105 (DTGVVGVALPLVGTDLGGSALNSSQQE). Asparagine 100 carries N-linked (GlcNAc...) asparagine glycosylation. A helical transmembrane segment spans residues 106 to 126 (IITAGTTIGAIFGSAILGGWG). Over 127–132 (DRLGRK) the chain is Cytoplasmic. Residues 133 to 153 (GAILVSDVFFTIGAVIIASSY) form a helical membrane-spanning segment. The Extracellular portion of the chain corresponds to 154–157 (SVPQ). Residues 158 to 178 (IIVGRIILGIGVGGAAVIAPL) traverse the membrane as a helical segment. The Cytoplasmic portion of the chain corresponds to 179-192 (FITETAPTAVRGRC). A helical transmembrane segment spans residues 193 to 213 (IGVNAFFIPFGQVVSDAIGAG). The Extracellular portion of the chain corresponds to 214–222 (VQNMHNGWR). Residues 223–243 (LLFALGAVPSLLQLLLFHYLP) traverse the membrane as a helical segment. Residues 244–325 (ESPRILILKG…AVSALQAAGQ (82 aa)) lie on the Cytoplasmic side of the membrane. A helical membrane pass occupies residues 326–346 (LTGFNTLLYYAGTLFGLLGLS). At 347-349 (NPA) the chain is on the extracellular side. A helical transmembrane segment spans residues 350–370 (LGGLIPAGTNAVFVLIGMSLV). The Cytoplasmic portion of the chain corresponds to 371 to 376 (DKVGRR). A helical transmembrane segment spans residues 377-397 (GLLLIGVPIMLLGHVWNIVSF). Topologically, residues 398-420 (YYMCKPTGGFLDTSYSYDTTDVG) are extracellular. A helical membrane pass occupies residues 421 to 441 (IVIGGIVFFVVGYGLTYSHLV). At 442–455 (WYQAEYLTLEVRSM) the chain is on the cytoplasmic side. A helical membrane pass occupies residues 456–476 (GSGIATTVCWIANLVVSVSYL). Topologically, residues 477 to 485 (SELETMTPS) are extracellular. Residues 486–506 (GTYGFYFGISVIGFVFLVFCL) form a helical membrane-spanning segment. Residues 507-590 (PETKQLSIDE…GGKRTPSASV (84 aa)) lie on the Cytoplasmic side of the membrane.

This sequence belongs to the major facilitator superfamily. Sugar transporter (TC 2.A.1.1) family.

The protein localises to the cell membrane. It carries out the reaction myo-inositol(out) + H(+)(out) = myo-inositol(in) + H(+)(in). Functionally, transporter for myo-inositol. The chain is Myo-inositol transporter 3A (ITR3A) from Cryptococcus neoformans var. grubii serotype A (strain H99 / ATCC 208821 / CBS 10515 / FGSC 9487) (Filobasidiella neoformans var. grubii).